The primary structure comprises 867 residues: MTENKTVSSSSTRDDQTNIGLTCQEVKALREKAWSRTNEGNAMSQSLVLYGASKENSEGFHESKMTNTEGVNKGIYFSYPCRRHSCAVVNIPAPCVNKMISHIQDVESKIQEHLKRFETSFEEWSRTSSTKDLKEDWSVTTPVKEVKPGEKRDEKCPELKQEMETLLSEAIRLIKSLETDRADAEEALKQQRSRKNMINMKIDSWSVWKLQELPLAVQKEHEAYLSDVIELQWHLEDKANQLQHFEKQKTELEEANAKIQADIDYMNEHGPLLDSKQNQELQDLKNHYKKKMEVMDLHRKVNEELEEALEACENARLKAQQIKEEIDKDIYQDEKTIEAYKREIYQLNSLFDHYSSSVINVNTNIEEKEEEVTEAIRETKSSKNELHSLSKMLEDLRRVYDQLTWKQKSHENQYLEAVNDFYAAKKTWDIELSDVAKDFSAISLACTKLTEDNKKLEIDINKITVKTNESIRKKSKYESEIKYLTIMKLKNDKHLKNIYKEAYRIGTLFHLTKHKTDEMEDKIAEVRRKFKGREEFLKKLTQGEVAAGMVLQKKLYSIYEVQALERKELIKNRAICAMSLAELQEPLLQLEDEAERIRSLDKEHSVMLNNIIDQKDLIRRKVGKVKKKLRKKGKKTLDALIETESKRSAIFKDLEATKSKTMIFYAKINELNEELKAKEEEKKSFDQTLEILKNKFITMRFKREHAQTVFDHYMQEKKDCEERIFEEDQRFRVLLAVRQKTLQDTQKIIADSLEENLRLAQEYQQLQITFLKEKDNYFNIYDKQLSLDTSIRDKKQLCQLQRRMHTLWQEHFKLVVLFSQMRLANFQTDSQESIQKILAVQEESSNLMQHILGFFQTLTDGTCENDG.

4 coiled-coil regions span residues Asp-153–Ser-204, Trp-233–Tyr-414, Ala-445–Ser-470, and Met-662–Phe-696.

This is Coiled-coil domain-containing protein 178 (CCDC178) from Homo sapiens (Human).